Reading from the N-terminus, the 349-residue chain is Fructose-bisphosphate aldolase 2, chloroplastic (349 aa).

Substrate is bound by residues arginine 47 and lysine 137. Glutamate 177 acts as the Proton acceptor in catalysis. Lysine 219 acts as the Schiff-base intermediate with dihydroxyacetone-P in catalysis.

It belongs to the class I fructose-bisphosphate aldolase family.

The protein resides in the plastid. Its subcellular location is the chloroplast. The catalysed reaction is beta-D-fructose 1,6-bisphosphate = D-glyceraldehyde 3-phosphate + dihydroxyacetone phosphate. It functions in the pathway carbohydrate degradation; glycolysis; D-glyceraldehyde 3-phosphate and glycerone phosphate from D-glucose: step 4/4. This Pisum sativum (Garden pea) protein is Fructose-bisphosphate aldolase 2, chloroplastic.